Consider the following 303-residue polypeptide: MIKQRTLKNEIRATGVGLHTGQKVYLTLRPAPIDAGIVFRRVDLSPAVDIPAHAENVGDTTLSTTLVNGDVRVSTVEHLMSAMAGLGIDNAIVEVSADEVPIMDGSAGPFVFLIQSAGIQEQNAPKKFIRIKKKVVVKDGEKEAAFYPFNGFKVSFGIDFDHPVFKGRKLDATIDFSSTSFVKEISRARTFGFMHEIEYLRSKGLVKGGSLDNAVVVDKYRIMNEDGLRYDDEFVKHKVLDAIGDLYLLGTSLIGEYRAYKSGHGLNNQVLRELMKREDAWELVTFDEEETAPISYIKPLLAV.

Zn(2+)-binding residues include H78, H237, and D241. H264 acts as the Proton donor in catalysis.

It belongs to the LpxC family. Requires Zn(2+) as cofactor.

The catalysed reaction is a UDP-3-O-[(3R)-3-hydroxyacyl]-N-acetyl-alpha-D-glucosamine + H2O = a UDP-3-O-[(3R)-3-hydroxyacyl]-alpha-D-glucosamine + acetate. Its pathway is glycolipid biosynthesis; lipid IV(A) biosynthesis; lipid IV(A) from (3R)-3-hydroxytetradecanoyl-[acyl-carrier-protein] and UDP-N-acetyl-alpha-D-glucosamine: step 2/6. Functionally, catalyzes the hydrolysis of UDP-3-O-myristoyl-N-acetylglucosamine to form UDP-3-O-myristoylglucosamine and acetate, the committed step in lipid A biosynthesis. This chain is UDP-3-O-acyl-N-acetylglucosamine deacetylase, found in Teredinibacter turnerae (strain ATCC 39867 / T7901).